The primary structure comprises 460 residues: Bifunctional protein GlmU (460 aa).

A pyrophosphorylase region spans residues 1 to 228 (MKNYALVLAA…NSLAMGVNDL (228 aa)). Residues 8 to 11 (LAAG), Lys-22, Gln-72, and 77 to 78 (GT) each bind UDP-N-acetyl-alpha-D-glucosamine. Asp-102 contacts Mg(2+). The UDP-N-acetyl-alpha-D-glucosamine site is built by Gly-139, Glu-154, Asn-169, and Asn-226. Asn-226 is a binding site for Mg(2+). Residues 229 to 249 (YAISKAEKYLREYINKDHMLN) are linker. The interval 250–460 (GVSMINPETI…LISPKPKKEE (211 aa)) is N-acetyltransferase. UDP-N-acetyl-alpha-D-glucosamine is bound by residues Arg-331 and Lys-349. The Proton acceptor role is filled by His-361. UDP-N-acetyl-alpha-D-glucosamine contacts are provided by Tyr-364 and Asn-375. Acetyl-CoA-binding positions include 384 to 385 (NY), Ala-421, and Arg-438.

This sequence in the N-terminal section; belongs to the N-acetylglucosamine-1-phosphate uridyltransferase family. In the C-terminal section; belongs to the transferase hexapeptide repeat family. As to quaternary structure, homotrimer. Mg(2+) is required as a cofactor.

The protein localises to the cytoplasm. The catalysed reaction is alpha-D-glucosamine 1-phosphate + acetyl-CoA = N-acetyl-alpha-D-glucosamine 1-phosphate + CoA + H(+). It catalyses the reaction N-acetyl-alpha-D-glucosamine 1-phosphate + UTP + H(+) = UDP-N-acetyl-alpha-D-glucosamine + diphosphate. The protein operates within nucleotide-sugar biosynthesis; UDP-N-acetyl-alpha-D-glucosamine biosynthesis; N-acetyl-alpha-D-glucosamine 1-phosphate from alpha-D-glucosamine 6-phosphate (route II): step 2/2. Its pathway is nucleotide-sugar biosynthesis; UDP-N-acetyl-alpha-D-glucosamine biosynthesis; UDP-N-acetyl-alpha-D-glucosamine from N-acetyl-alpha-D-glucosamine 1-phosphate: step 1/1. It functions in the pathway bacterial outer membrane biogenesis; LPS lipid A biosynthesis. Functionally, catalyzes the last two sequential reactions in the de novo biosynthetic pathway for UDP-N-acetylglucosamine (UDP-GlcNAc). The C-terminal domain catalyzes the transfer of acetyl group from acetyl coenzyme A to glucosamine-1-phosphate (GlcN-1-P) to produce N-acetylglucosamine-1-phosphate (GlcNAc-1-P), which is converted into UDP-GlcNAc by the transfer of uridine 5-monophosphate (from uridine 5-triphosphate), a reaction catalyzed by the N-terminal domain. This chain is Bifunctional protein GlmU, found in Acholeplasma laidlawii (strain PG-8A).